A 149-amino-acid polypeptide reads, in one-letter code: MRMNKQIVVTDWIKEKPKLGSFLKLTLSSDERRILRGKRLTDCDQEIILQLPREGKLNDGDILSTNKSNFYVEIVAKKENLIEISSNSKIELIKTAYHLGNRHVELEIEEGILLTKSDYVIKNMLLNFKVNIKNTKKKFFPERGAHSHE.

The protein belongs to the UreE family.

The protein resides in the cytoplasm. In terms of biological role, involved in urease metallocenter assembly. Binds nickel. Probably functions as a nickel donor during metallocenter assembly. This chain is Urease accessory protein UreE, found in Prochlorococcus marinus (strain MIT 9301).